A 264-amino-acid chain; its full sequence is Agamous-like MADS-box protein AGL61 (264 aa).

In terms of domain architecture, MADS-box spans 62–122; it reads IGRQKIPMVK…KKPFSFGHPS (61 aa).

As to quaternary structure, interacts with PHE1/AGL37, PHE2/AGL38, AGL80 and AGL86. Forms a heterodimer with AGL80. As to expression, expressed exclusively in the central cell of the female gametophyte and in early endosperm.

The protein resides in the nucleus. Its function is as follows. Probable transcription factor. Controls central cell differentiation during female gametophyte development. The polypeptide is Agamous-like MADS-box protein AGL61 (AGL61) (Arabidopsis thaliana (Mouse-ear cress)).